The primary structure comprises 417 residues: UDP-N-acetylglucosamine 1-carboxyvinyltransferase (417 aa).

22-23 lines the phosphoenolpyruvate pocket; sequence KN. Arginine 93 is a binding site for UDP-N-acetyl-alpha-D-glucosamine. The Proton donor role is filled by cysteine 117. At cysteine 117 the chain carries 2-(S-cysteinyl)pyruvic acid O-phosphothioketal. UDP-N-acetyl-alpha-D-glucosamine contacts are provided by residues 122 to 126, aspartate 304, and isoleucine 326; that span reads RPVDQ.

The protein belongs to the EPSP synthase family. MurA subfamily.

Its subcellular location is the cytoplasm. The catalysed reaction is phosphoenolpyruvate + UDP-N-acetyl-alpha-D-glucosamine = UDP-N-acetyl-3-O-(1-carboxyvinyl)-alpha-D-glucosamine + phosphate. The protein operates within cell wall biogenesis; peptidoglycan biosynthesis. Functionally, cell wall formation. Adds enolpyruvyl to UDP-N-acetylglucosamine. This Neisseria meningitidis serogroup B (strain ATCC BAA-335 / MC58) protein is UDP-N-acetylglucosamine 1-carboxyvinyltransferase.